The following is a 102-amino-acid chain: Small ribosomal subunit protein uS10 (102 aa).

It belongs to the universal ribosomal protein uS10 family. Part of the 30S ribosomal subunit.

Involved in the binding of tRNA to the ribosomes. In Streptococcus suis (strain 98HAH33), this protein is Small ribosomal subunit protein uS10.